A 706-amino-acid chain; its full sequence is Polyribonucleotide nucleotidyltransferase (706 aa).

Positions 490 and 496 each coordinate Mg(2+). Positions 556 to 615 constitute a KH domain; sequence PRIETMQIPTDKIREVIGSGGKVIREIVEVSGAKVDINDEGIIKIASPNGDSIQKAYDMI. The S1 motif domain maps to 625-693; the sequence is GKIYKGKVVK…DRGKVRLAMK (69 aa).

Belongs to the polyribonucleotide nucleotidyltransferase family. Mg(2+) is required as a cofactor.

The protein localises to the cytoplasm. The catalysed reaction is RNA(n+1) + phosphate = RNA(n) + a ribonucleoside 5'-diphosphate. Involved in mRNA degradation. Catalyzes the phosphorolysis of single-stranded polyribonucleotides processively in the 3'- to 5'-direction. The sequence is that of Polyribonucleotide nucleotidyltransferase from Jannaschia sp. (strain CCS1).